Consider the following 140-residue polypeptide: Short-chain diamines transporter (140 aa).

4 consecutive transmembrane segments (helical) span residues 7-27 (IFHA…AAAL), 36-56 (LALV…IYNL), 79-99 (VGFE…FLEI), and 105-125 (LMLE…FNWL).

It belongs to the proteobacterial antimicrobial compound efflux (PACE) (TC 2.A.117) family.

It is found in the cell inner membrane. Functionally, mediates the efflux of short-chain diamines when energized by an electrochemical gradient. Confers resistance to chlorhexidine, benzalkonium, proflavine and acriflavine. Mediates efflux of both proflavine and acriflavine via an energy-dependent mechanism. The sequence is that of Short-chain diamines transporter from Vibrio parahaemolyticus serotype O3:K6 (strain RIMD 2210633).